A 61-amino-acid polypeptide reads, in one-letter code: Sperm protamine P1 (61 aa).

Positions 1–61 are disordered; the sequence is MARYRHSRSR…RRYHSHRRRY (61 aa).

The protein belongs to the protamine P1 family. Testis.

The protein resides in the nucleus. Its subcellular location is the chromosome. Functionally, protamines substitute for histones in the chromatin of sperm during the haploid phase of spermatogenesis. They compact sperm DNA into a highly condensed, stable and inactive complex. This chain is Sperm protamine P1 (PRM1), found in Notoryctes typhlops (Southern marsupial mole).